Reading from the N-terminus, the 789-residue chain is Cell pattern formation-associated protein stuA (789 aa).

2 disordered regions span residues 50–131 (PALS…NTVG) and 205–224 (PGGV…SVSS). Composition is skewed to polar residues over residues 55 to 69 (PTAS…SYRT), 76 to 88 (ASHN…SLSG), and 115 to 131 (LDSS…NTVG). The region spanning 272 to 378 (RVTATLWEDE…HNIGGLLYHP (107 aa)) is the HTH APSES-type domain. Residues 306–327 (GTKLLNVAGMTRGRRDGILKSE) constitute a DNA-binding region (H-T-H motif). Disordered regions lie at residues 389–459 (QESQ…ASSL), 487–543 (SIDT…YAPQ), and 616–789 (HDSA…ARRR). Composition is skewed to polar residues over residues 419 to 438 (LQTP…SQSA), 487 to 529 (SIDT…SKSY), 620 to 636 (GYNT…NPSV), 645 to 667 (QLAS…TPRT), and 676 to 713 (SGYN…SVAS). The tract at residues 731–758 (KRMREDDDVDQIVRPDSRGAEYESKRRK) is nuclear localization domain. The segment covering 741–754 (QIVRPDSRGAEYES) has biased composition (basic and acidic residues).

This sequence belongs to the EFG1/PHD1/stuA family.

Its subcellular location is the nucleus. Its function is as follows. Transcription factor that regulates asexual reproduction. Binds the StuA-response elements (StRE) with the consensus sequence 5'-(A/T)CGCG(T/A)N(A/C)-3' at the promoters of target genes. This chain is Cell pattern formation-associated protein stuA, found in Aspergillus flavus (strain ATCC 200026 / FGSC A1120 / IAM 13836 / NRRL 3357 / JCM 12722 / SRRC 167).